The sequence spans 98 residues: NADH-ubiquinone oxidoreductase chain 4L (98 aa).

A run of 3 helical transmembrane segments spans residues 1-21, 29-49, and 61-81; these read MSLVHMNVIVAFTLSLVGLLM, ALLCMEGMMLSLFVLAALTIL, and IILLVFAACEAAIGLALLVTI.

Belongs to the complex I subunit 4L family. As to quaternary structure, core subunit of respiratory chain NADH dehydrogenase (Complex I) which is composed of 45 different subunits.

The protein localises to the mitochondrion inner membrane. The enzyme catalyses a ubiquinone + NADH + 5 H(+)(in) = a ubiquinol + NAD(+) + 4 H(+)(out). Core subunit of the mitochondrial membrane respiratory chain NADH dehydrogenase (Complex I) which catalyzes electron transfer from NADH through the respiratory chain, using ubiquinone as an electron acceptor. Part of the enzyme membrane arm which is embedded in the lipid bilayer and involved in proton translocation. This chain is NADH-ubiquinone oxidoreductase chain 4L (MT-ND4L), found in Ziphius cavirostris (Cuvier's beaked whale).